Reading from the N-terminus, the 60-residue chain is Large ribosomal subunit protein eL37 (60 aa).

The Zn(2+) site is built by C19, C22, C34, and C37. Residues 19 to 37 (CRRCGRISFHAQKKVCSSC) form a C4-type zinc finger.

This sequence belongs to the eukaryotic ribosomal protein eL37 family. It depends on Zn(2+) as a cofactor.

Its function is as follows. Binds to the 23S rRNA. This Methanoregula boonei (strain DSM 21154 / JCM 14090 / 6A8) protein is Large ribosomal subunit protein eL37.